The sequence spans 532 residues: 2,3-bisphosphoglycerate-independent phosphoglycerate mutase (532 aa).

Positions 15 and 65 each coordinate Mn(2+). Residue serine 65 is the Phosphoserine intermediate of the active site. Residues histidine 126, 156 to 157 (RD), arginine 188, arginine 194, 258 to 261 (RPDR), and lysine 331 each bind substrate. The Mn(2+) site is built by aspartate 398, histidine 402, aspartate 439, histidine 440, and histidine 457.

Belongs to the BPG-independent phosphoglycerate mutase family. As to quaternary structure, monomer. The cofactor is Mn(2+).

It carries out the reaction (2R)-2-phosphoglycerate = (2R)-3-phosphoglycerate. Its pathway is carbohydrate degradation; glycolysis; pyruvate from D-glyceraldehyde 3-phosphate: step 3/5. Its function is as follows. Catalyzes the interconversion of 2-phosphoglycerate and 3-phosphoglycerate. This chain is 2,3-bisphosphoglycerate-independent phosphoglycerate mutase, found in Microcystis aeruginosa (strain NIES-843 / IAM M-2473).